We begin with the raw amino-acid sequence, 473 residues long: 3-isopropylmalate dehydratase large subunit (473 aa).

[4Fe-4S] cluster contacts are provided by Cys-351, Cys-414, and Cys-417.

The protein belongs to the aconitase/IPM isomerase family. LeuC type 1 subfamily. In terms of assembly, heterodimer of LeuC and LeuD. It depends on [4Fe-4S] cluster as a cofactor.

The catalysed reaction is (2R,3S)-3-isopropylmalate = (2S)-2-isopropylmalate. Its pathway is amino-acid biosynthesis; L-leucine biosynthesis; L-leucine from 3-methyl-2-oxobutanoate: step 2/4. In terms of biological role, catalyzes the isomerization between 2-isopropylmalate and 3-isopropylmalate, via the formation of 2-isopropylmaleate. This is 3-isopropylmalate dehydratase large subunit from Paracidovorax citrulli (strain AAC00-1) (Acidovorax citrulli).